The following is a 226-amino-acid chain: uncharacterized protein (226 aa).

Residues 121-163 (TVDELIKTIEKELNKVKKSRKNREKKTNEVEEIIEELIEEDDI) are a coiled coil.

This is an uncharacterized protein from Methanocaldococcus jannaschii (strain ATCC 43067 / DSM 2661 / JAL-1 / JCM 10045 / NBRC 100440) (Methanococcus jannaschii).